Here is a 519-residue protein sequence, read N- to C-terminus: Chloroethene reductive dehalogenase (519 aa).

The segment at residues 1–43 (MSKFHKTISRRDFMKGLGLAGAGIGAVAASAPVFHDIDELVSS) is a signal peptide (tat-type signal). 4Fe-4S ferredoxin-type domains follow at residues 388–420 (PTPP…QEDE) and 435–465 (LGYR…LENA). Cys-400, Cys-403, Cys-406, Cys-410, Cys-444, Cys-448, Cys-451, and Cys-455 together coordinate [4Fe-4S] cluster.

The protein belongs to the PceA family. [4Fe-4S] cluster is required as a cofactor. It depends on corrinoid as a cofactor. Post-translationally, predicted to be exported by the Tat system. The position of the signal peptide cleavage has been experimentally proven.

The protein resides in the cell membrane. The catalysed reaction is chloroethene + AH2 = ethene + chloride + A + H(+). It carries out the reaction (Z)-1,2-dichloroethene + AH2 = chloroethene + chloride + A + H(+). It catalyses the reaction 1,1-dichloroethene + AH2 = chloroethene + chloride + A + H(+). In terms of biological role, catalyzes the reductive dechlorination of chloroethene (or vinyl chloride, VC) to ethene. Can also reduce all dichloroethene (DCE) isomers, but not tetrachloroethene (PCE) or trichloroethene (TCE), at high rates. Reduced methyl viologen can act as the artificial electron donor. This chain is Chloroethene reductive dehalogenase, found in Dehalococcoides mccartyi (strain VS).